The sequence spans 195 residues: 3-isopropylmalate dehydratase small subunit (195 aa).

Belongs to the LeuD family. LeuD type 1 subfamily. In terms of assembly, heterodimer of LeuC and LeuD.

It carries out the reaction (2R,3S)-3-isopropylmalate = (2S)-2-isopropylmalate. It functions in the pathway amino-acid biosynthesis; L-leucine biosynthesis; L-leucine from 3-methyl-2-oxobutanoate: step 2/4. Its function is as follows. Catalyzes the isomerization between 2-isopropylmalate and 3-isopropylmalate, via the formation of 2-isopropylmaleate. This is 3-isopropylmalate dehydratase small subunit from Salinispora tropica (strain ATCC BAA-916 / DSM 44818 / JCM 13857 / NBRC 105044 / CNB-440).